Consider the following 294-residue polypeptide: Transmembrane protein 178B (294 aa).

An N-terminal signal peptide occupies residues 1-23; it reads MAAGKLLLYAGLSLSLCALGMLA. 3 helical membrane passes run 172–192, 206–226, and 252–272; these read AGFM…GMLG, LLFL…VAGI, and MFCA…CTLA.

Belongs to the TMEM178 family.

It localises to the membrane. In Danio rerio (Zebrafish), this protein is Transmembrane protein 178B (tmem178b).